Reading from the N-terminus, the 426-residue chain is Gamma-glutamyl phosphate reductase (426 aa).

This sequence belongs to the gamma-glutamyl phosphate reductase family.

Its subcellular location is the cytoplasm. The enzyme catalyses L-glutamate 5-semialdehyde + phosphate + NADP(+) = L-glutamyl 5-phosphate + NADPH + H(+). It functions in the pathway amino-acid biosynthesis; L-proline biosynthesis; L-glutamate 5-semialdehyde from L-glutamate: step 2/2. Functionally, catalyzes the NADPH-dependent reduction of L-glutamate 5-phosphate into L-glutamate 5-semialdehyde and phosphate. The product spontaneously undergoes cyclization to form 1-pyrroline-5-carboxylate. The sequence is that of Gamma-glutamyl phosphate reductase from Deinococcus geothermalis (strain DSM 11300 / CIP 105573 / AG-3a).